The chain runs to 481 residues: Aspartyl/glutamyl-tRNA(Asn/Gln) amidotransferase subunit B (481 aa).

It belongs to the GatB/GatE family. GatB subfamily. Heterotrimer of A, B and C subunits.

It catalyses the reaction L-glutamyl-tRNA(Gln) + L-glutamine + ATP + H2O = L-glutaminyl-tRNA(Gln) + L-glutamate + ADP + phosphate + H(+). The enzyme catalyses L-aspartyl-tRNA(Asn) + L-glutamine + ATP + H2O = L-asparaginyl-tRNA(Asn) + L-glutamate + ADP + phosphate + 2 H(+). Its function is as follows. Allows the formation of correctly charged Asn-tRNA(Asn) or Gln-tRNA(Gln) through the transamidation of misacylated Asp-tRNA(Asn) or Glu-tRNA(Gln) in organisms which lack either or both of asparaginyl-tRNA or glutaminyl-tRNA synthetases. The reaction takes place in the presence of glutamine and ATP through an activated phospho-Asp-tRNA(Asn) or phospho-Glu-tRNA(Gln). This is Aspartyl/glutamyl-tRNA(Asn/Gln) amidotransferase subunit B from Pseudomonas putida (strain W619).